A 293-amino-acid chain; its full sequence is Formamidopyrimidine-DNA glycosylase (293 aa).

Residue Pro2 is the Schiff-base intermediate with DNA of the active site. Glu3 serves as the catalytic Proton donor. Lys60 functions as the Proton donor; for beta-elimination activity in the catalytic mechanism. Residues His110, Arg129, and Arg174 each coordinate DNA. An FPG-type zinc finger spans residues Asn259–Lys293. The active-site Proton donor; for delta-elimination activity is the Arg283.

Belongs to the FPG family. As to quaternary structure, monomer. The cofactor is Zn(2+).

The catalysed reaction is Hydrolysis of DNA containing ring-opened 7-methylguanine residues, releasing 2,6-diamino-4-hydroxy-5-(N-methyl)formamidopyrimidine.. The enzyme catalyses 2'-deoxyribonucleotide-(2'-deoxyribose 5'-phosphate)-2'-deoxyribonucleotide-DNA = a 3'-end 2'-deoxyribonucleotide-(2,3-dehydro-2,3-deoxyribose 5'-phosphate)-DNA + a 5'-end 5'-phospho-2'-deoxyribonucleoside-DNA + H(+). Involved in base excision repair of DNA damaged by oxidation or by mutagenic agents. Acts as a DNA glycosylase that recognizes and removes damaged bases. Has a preference for oxidized purines, such as 7,8-dihydro-8-oxoguanine (8-oxoG). Has AP (apurinic/apyrimidinic) lyase activity and introduces nicks in the DNA strand. Cleaves the DNA backbone by beta-delta elimination to generate a single-strand break at the site of the removed base with both 3'- and 5'-phosphates. This chain is Formamidopyrimidine-DNA glycosylase, found in Prochlorococcus marinus (strain MIT 9312).